Reading from the N-terminus, the 377-residue chain is Nitric oxide reductase FlRd-NAD(+) reductase (377 aa).

This sequence belongs to the FAD-dependent oxidoreductase family. Requires FAD as cofactor.

The protein localises to the cytoplasm. The enzyme catalyses 2 reduced [nitric oxide reductase rubredoxin domain] + NAD(+) + H(+) = 2 oxidized [nitric oxide reductase rubredoxin domain] + NADH. Its pathway is nitrogen metabolism; nitric oxide reduction. One of at least two accessory proteins for anaerobic nitric oxide (NO) reductase. Reduces the rubredoxin moiety of NO reductase. This chain is Nitric oxide reductase FlRd-NAD(+) reductase, found in Salmonella paratyphi B (strain ATCC BAA-1250 / SPB7).